Reading from the N-terminus, the 72-residue chain is Translation initiation factor IF-1 (72 aa).

The region spanning 1–72 (MSKEDVIEVE…TRGRITWRKK (72 aa)) is the S1-like domain.

It belongs to the IF-1 family. In terms of assembly, component of the 30S ribosomal translation pre-initiation complex which assembles on the 30S ribosome in the order IF-2 and IF-3, IF-1 and N-formylmethionyl-tRNA(fMet); mRNA recruitment can occur at any time during PIC assembly.

It localises to the cytoplasm. Functionally, one of the essential components for the initiation of protein synthesis. Stabilizes the binding of IF-2 and IF-3 on the 30S subunit to which N-formylmethionyl-tRNA(fMet) subsequently binds. Helps modulate mRNA selection, yielding the 30S pre-initiation complex (PIC). Upon addition of the 50S ribosomal subunit IF-1, IF-2 and IF-3 are released leaving the mature 70S translation initiation complex. In Alkaliphilus metalliredigens (strain QYMF), this protein is Translation initiation factor IF-1.